The chain runs to 337 residues: MSATSLPGSQQPDLGEIRHDWSVAEIRAIHDLPLMDLVFRAAQVHRRHNDPADIQRASLLSIKTGGCPEDCAYCPQSAHHKGAGVARERLMPVETVLAEAAAAKAAGAQRFCMGAAWRQPKDGPEFDAVLAMVRGVRGLGMEACVTLGMLTPSQAGRLAEAGLTSYNHNLDTGPDFYEDIISTRTYDERLQTLANVREAGIGVCCGGIVGMGEGVTDRAAMLQVLANHAPHPESVPINALVAVPGTPLEDQPAVDPFDLVRMCATARIVMPRSRVRLSAGRKSLTREAQVLCFLAGANSIFYGERLLTTANNGQDDDAALLADLGIRVGEPVRAAAE.

Residues 52–281 (ADIQRASLLS…RSRVRLSAGR (230 aa)) form the Radical SAM core domain. [4Fe-4S] cluster-binding residues include Cys67, Cys71, and Cys74. The [2Fe-2S] cluster site is built by Cys112, Cys144, Cys204, and Arg276.

This sequence belongs to the radical SAM superfamily. Biotin synthase family. As to quaternary structure, homodimer. [4Fe-4S] cluster serves as cofactor. Requires [2Fe-2S] cluster as cofactor.

It catalyses the reaction (4R,5S)-dethiobiotin + (sulfur carrier)-SH + 2 reduced [2Fe-2S]-[ferredoxin] + 2 S-adenosyl-L-methionine = (sulfur carrier)-H + biotin + 2 5'-deoxyadenosine + 2 L-methionine + 2 oxidized [2Fe-2S]-[ferredoxin]. Its pathway is cofactor biosynthesis; biotin biosynthesis; biotin from 7,8-diaminononanoate: step 2/2. In terms of biological role, catalyzes the conversion of dethiobiotin (DTB) to biotin by the insertion of a sulfur atom into dethiobiotin via a radical-based mechanism. This Methylobacterium radiotolerans (strain ATCC 27329 / DSM 1819 / JCM 2831 / NBRC 15690 / NCIMB 10815 / 0-1) protein is Biotin synthase.